The following is a 301-amino-acid chain: UDP-N-acetylenolpyruvoylglucosamine reductase 1 (301 aa).

In terms of domain architecture, FAD-binding PCMH-type spans 29–196; sequence KIGGPADILI…LEAEFQLQIG (168 aa). Residue R174 is part of the active site. The active-site Proton donor is S225. E295 is a catalytic residue.

This sequence belongs to the MurB family. It depends on FAD as a cofactor.

The protein resides in the cytoplasm. The catalysed reaction is UDP-N-acetyl-alpha-D-muramate + NADP(+) = UDP-N-acetyl-3-O-(1-carboxyvinyl)-alpha-D-glucosamine + NADPH + H(+). It participates in cell wall biogenesis; peptidoglycan biosynthesis. Cell wall formation. The sequence is that of UDP-N-acetylenolpyruvoylglucosamine reductase 1 from Bacillus cereus (strain ZK / E33L).